The chain runs to 280 residues: Phosphatidylglycerol--prolipoprotein diacylglyceryl transferase (280 aa).

4 helical membrane passes run 30–50 (WYGL…RRIV), 71–91 (FLLW…ILFY), 106–126 (IWNG…AMII), and 132–152 (AIPI…GLFF). Arg154 contributes to the a 1,2-diacyl-sn-glycero-3-phospho-(1'-sn-glycerol) binding site. 3 consecutive transmembrane segments (helical) span residues 188 to 208 (QLYE…WFVY), 217 to 237 (GLVT…VEFF), and 251 to 271 (WLTM…WAIA).

This sequence belongs to the Lgt family.

The protein localises to the cell inner membrane. It carries out the reaction L-cysteinyl-[prolipoprotein] + a 1,2-diacyl-sn-glycero-3-phospho-(1'-sn-glycerol) = an S-1,2-diacyl-sn-glyceryl-L-cysteinyl-[prolipoprotein] + sn-glycerol 1-phosphate + H(+). The protein operates within protein modification; lipoprotein biosynthesis (diacylglyceryl transfer). Its function is as follows. Catalyzes the transfer of the diacylglyceryl group from phosphatidylglycerol to the sulfhydryl group of the N-terminal cysteine of a prolipoprotein, the first step in the formation of mature lipoproteins. The chain is Phosphatidylglycerol--prolipoprotein diacylglyceryl transferase from Sinorhizobium medicae (strain WSM419) (Ensifer medicae).